The following is a 156-amino-acid chain: Jun dimerization protein 2 (156 aa).

Residues 56-95 are disordered; the sequence is KRPFDAIKSEDDDDDERKKRRREKNKVAAARCRNRKKERT. The bZIP domain occupies 70–133; the sequence is DERKKRRREK…QQLIVMLNLH (64 aa). The tract at residues 72-94 is basic motif; that stretch reads RKKRRREKNKVAAARCRNRKKER. Positions 98–126 are leucine-zipper; sequence LQKESERLEMLNSDLKSQIEELKSERQQL.

It belongs to the bZIP family. ATF subfamily.

It is found in the nucleus. Functionally, component of the AP-1 transcription factor that represses transactivation mediated by the Jun family of proteins. The sequence is that of Jun dimerization protein 2 (jdp2) from Danio rerio (Zebrafish).